A 446-amino-acid polypeptide reads, in one-letter code: Tubulin beta-3 chain (446 aa).

GTP contacts are provided by glutamine 11, glutamate 69, serine 138, glycine 142, threonine 143, glycine 144, asparagine 204, and asparagine 226. Residue glutamate 69 participates in Mg(2+) binding. Residues 421–446 are disordered; sequence EYQQYQDATAEEEDYEEEEEDEEVAA. Acidic residues predominate over residues 429-446; the sequence is TAEEEDYEEEEEDEEVAA.

It belongs to the tubulin family. As to quaternary structure, dimer of alpha and beta chains. A typical microtubule is a hollow water-filled tube with an outer diameter of 25 nm and an inner diameter of 15 nM. Alpha-beta heterodimers associate head-to-tail to form protofilaments running lengthwise along the microtubule wall with the beta-tubulin subunit facing the microtubule plus end conferring a structural polarity. Microtubules usually have 13 protofilaments but different protofilament numbers can be found in some organisms and specialized cells. Mg(2+) is required as a cofactor. Expressed in roots, second node, leaf sheaths, and suspension cultured cells.

The protein resides in the cytoplasm. Its subcellular location is the cytoskeleton. In terms of biological role, tubulin is the major constituent of microtubules, a cylinder consisting of laterally associated linear protofilaments composed of alpha- and beta-tubulin heterodimers. Microtubules grow by the addition of GTP-tubulin dimers to the microtubule end, where a stabilizing cap forms. Below the cap, tubulin dimers are in GDP-bound state, owing to GTPase activity of alpha-tubulin. The sequence is that of Tubulin beta-3 chain (TUBB3) from Oryza sativa subsp. japonica (Rice).